A 254-amino-acid polypeptide reads, in one-letter code: Large ribosomal subunit protein uL2B (254 aa).

Lysine 46 is covalently cross-linked (Glycyl lysine isopeptide (Lys-Gly) (interchain with G-Cter in ubiquitin)). Serine 52 is subject to Phosphoserine. Lysine 93 participates in a covalent cross-link: Glycyl lysine isopeptide (Lys-Gly) (interchain with G-Cter in ubiquitin). Phosphoserine is present on serine 95. Residues lysine 119 and lysine 145 each participate in a glycyl lysine isopeptide (Lys-Gly) (interchain with G-Cter in ubiquitin) cross-link. Serine 159, serine 160, and serine 249 each carry phosphoserine.

The protein belongs to the universal ribosomal protein uL2 family. Component of the large ribosomal subunit (LSU). Mature yeast ribosomes consist of a small (40S) and a large (60S) subunit. The 40S small subunit contains 1 molecule of ribosomal RNA (18S rRNA) and 33 different proteins (encoded by 57 genes). The large 60S subunit contains 3 rRNA molecules (25S, 5.8S and 5S rRNA) and 46 different proteins (encoded by 81 genes).

It localises to the cytoplasm. Component of the ribosome, a large ribonucleoprotein complex responsible for the synthesis of proteins in the cell. The small ribosomal subunit (SSU) binds messenger RNAs (mRNAs) and translates the encoded message by selecting cognate aminoacyl-transfer RNA (tRNA) molecules. The large subunit (LSU) contains the ribosomal catalytic site termed the peptidyl transferase center (PTC), which catalyzes the formation of peptide bonds, thereby polymerizing the amino acids delivered by tRNAs into a polypeptide chain. The nascent polypeptides leave the ribosome through a tunnel in the LSU and interact with protein factors that function in enzymatic processing, targeting, and the membrane insertion of nascent chains at the exit of the ribosomal tunnel. The protein is Large ribosomal subunit protein uL2B of Saccharomyces cerevisiae (strain ATCC 204508 / S288c) (Baker's yeast).